Reading from the N-terminus, the 168-residue chain is Oleosin 18.2 kDa (168 aa).

Residue Ala2 is modified to N-acetylalanine. Residues 2 to 45 (AEVRDRNLPHQVQVHPQYRLDNTTGGGYGAKNYHSGPSTSQVLA) are polar. Helical transmembrane passes span 43-63 (VLAV…AGLT), 76-96 (PLFI…AMAV), and 97-117 (TGFL…SYVL). The segment at 46 to 117 (VLTLLPIGGT…TGLSSLSYVL (72 aa)) is hydrophobic.

The protein belongs to the oleosin family.

It localises to the lipid droplet. Its subcellular location is the membrane. In terms of biological role, may have a structural role to stabilize the lipid body during desiccation of the seed by preventing coalescence of the oil. Probably interacts with both lipid and phospholipid moieties of lipid bodies. May also provide recognition signals for specific lipase anchorage in lipolysis during seedling growth. This is Oleosin 18.2 kDa (MATP6-A) from Gossypium hirsutum (Upland cotton).